Reading from the N-terminus, the 289-residue chain is 4-diphosphocytidyl-2-C-methyl-D-erythritol kinase (289 aa).

K10 is an active-site residue. ATP is bound at residue 94–104 (PVAAGLAGGSS). D136 is a catalytic residue.

Belongs to the GHMP kinase family. IspE subfamily.

It carries out the reaction 4-CDP-2-C-methyl-D-erythritol + ATP = 4-CDP-2-C-methyl-D-erythritol 2-phosphate + ADP + H(+). Its pathway is isoprenoid biosynthesis; isopentenyl diphosphate biosynthesis via DXP pathway; isopentenyl diphosphate from 1-deoxy-D-xylulose 5-phosphate: step 3/6. In terms of biological role, catalyzes the phosphorylation of the position 2 hydroxy group of 4-diphosphocytidyl-2C-methyl-D-erythritol. The chain is 4-diphosphocytidyl-2-C-methyl-D-erythritol kinase from Geobacillus sp. (strain WCH70).